Reading from the N-terminus, the 499-residue chain is D-alanine--D-alanyl carrier protein ligase (499 aa).

152–153 contributes to the ATP binding site; that stretch reads TS. D197 provides a ligand contact to D-alanine. Residues 292 to 297, D372, 384 to 387, and K485 contribute to the ATP site; these read NTYGPT and YQGR. K485 serves as a coordination point for D-alanine.

The protein belongs to the ATP-dependent AMP-binding enzyme family. DltA subfamily.

The protein localises to the cytoplasm. It catalyses the reaction holo-[D-alanyl-carrier protein] + D-alanine + ATP = D-alanyl-[D-alanyl-carrier protein] + AMP + diphosphate. It functions in the pathway cell wall biogenesis; lipoteichoic acid biosynthesis. In terms of biological role, catalyzes the first step in the D-alanylation of lipoteichoic acid (LTA), the activation of D-alanine and its transfer onto the D-alanyl carrier protein (Dcp) DltC. In an ATP-dependent two-step reaction, forms a high energy D-alanyl-AMP intermediate, followed by transfer of the D-alanyl residue as a thiol ester to the phosphopantheinyl prosthetic group of the Dcp. D-alanylation of LTA plays an important role in modulating the properties of the cell wall in Gram-positive bacteria, influencing the net charge of the cell wall. This is D-alanine--D-alanyl carrier protein ligase from Lactococcus lactis subsp. lactis (strain IL1403) (Streptococcus lactis).